Consider the following 549-residue polypeptide: Hydroxylamine reductase (549 aa).

4 residues coordinate [4Fe-4S] cluster: cysteine 3, cysteine 6, cysteine 15, and cysteine 21. Hybrid [4Fe-2O-2S] cluster contacts are provided by histidine 248, glutamate 272, cysteine 316, cysteine 403, cysteine 431, cysteine 456, glutamate 490, and lysine 492. A Cysteine persulfide modification is found at cysteine 403.

This sequence belongs to the HCP family. [4Fe-4S] cluster serves as cofactor. It depends on hybrid [4Fe-2O-2S] cluster as a cofactor.

Its subcellular location is the cytoplasm. The enzyme catalyses A + NH4(+) + H2O = hydroxylamine + AH2 + H(+). Catalyzes the reduction of hydroxylamine to form NH(3) and H(2)O. The sequence is that of Hydroxylamine reductase from Rhodospirillum rubrum (strain ATCC 11170 / ATH 1.1.1 / DSM 467 / LMG 4362 / NCIMB 8255 / S1).